The chain runs to 325 residues: Putative aryl-alcohol dehydrogenase C750.01 (325 aa).

Belongs to the aldo/keto reductase family. Aldo/keto reductase 2 subfamily.

The polypeptide is Putative aryl-alcohol dehydrogenase C750.01 (Schizosaccharomyces pombe (strain 972 / ATCC 24843) (Fission yeast)).